The following is a 504-amino-acid chain: MVSIRPDEISSILKQQIADYDKSVSVSNVGTVLQIGDGIARVYGLEKVMAGELVEFEDGTEGIALNLEDDNVGVVLMGEALGVQEGSTVKATGKIASVPVGEAMLGRVVNPLGQQIDGKGEMATTDSRLIESIAPGIIKRKSVHEPMQTGITSIDAMIPIGRGQRELIIGDRQTGKTAIAIDTIINQKGQDVICVYVAVGQKQASVANVVEVLKEKGALDYTIIVNAGASEAAALQYLAPYTGAAIAEHFMYQGKATLVIYDDLTKQAQAYRQMSLLLRRPPGREAYPGDVFYCHSRLLERAAKLSDAMGAGSMTSLPIIETQAGDVSAYIPTNVISITDGQIFLSSDLFNSGLRPAINVGISVSRVGGAAQTKAIKKIAGTLKLELAQFDELAAFSQFASDLDEATQKQLGRGKRLRELLKQPQFDPLNLAEQVAIVYAGVKGLIDEVPEEEVVKFARELRDYLKTNKAEFLKNVLSEKVLSEASESMLKDAISEVKSSMLAA.

170 to 177 (GDRQTGKT) serves as a coordination point for ATP.

This sequence belongs to the ATPase alpha/beta chains family. As to quaternary structure, F-type ATPases have 2 components, CF(1) - the catalytic core - and CF(0) - the membrane proton channel. CF(1) has five subunits: alpha(3), beta(3), gamma(1), delta(1), epsilon(1). CF(0) has four main subunits: a(1), b(1), b'(1) and c(9-12).

The protein resides in the cellular thylakoid membrane. It catalyses the reaction ATP + H2O + 4 H(+)(in) = ADP + phosphate + 5 H(+)(out). Its function is as follows. Produces ATP from ADP in the presence of a proton gradient across the membrane. The alpha chain is a regulatory subunit. This Prochlorococcus marinus (strain NATL2A) protein is ATP synthase subunit alpha.